The primary structure comprises 511 residues: UDP-N-acetylmuramoyl-L-alanyl-D-glutamate--2,6-diaminopimelate ligase (511 aa).

Serine 33 contacts UDP-N-acetyl-alpha-D-muramoyl-L-alanyl-D-glutamate. Residue glycine 118–threonine 124 coordinates ATP. Residues threonine 160–threonine 161, serine 187, glutamine 193, and arginine 195 contribute to the UDP-N-acetyl-alpha-D-muramoyl-L-alanyl-D-glutamate site. N6-carboxylysine is present on lysine 227. Meso-2,6-diaminopimelate-binding positions include arginine 403, aspartate 427–arginine 430, glycine 478, and glutamate 482. Residues aspartate 427–arginine 430 carry the Meso-diaminopimelate recognition motif motif.

The protein belongs to the MurCDEF family. MurE subfamily. It depends on Mg(2+) as a cofactor. Post-translationally, carboxylation is probably crucial for Mg(2+) binding and, consequently, for the gamma-phosphate positioning of ATP.

The protein localises to the cytoplasm. It catalyses the reaction UDP-N-acetyl-alpha-D-muramoyl-L-alanyl-D-glutamate + meso-2,6-diaminopimelate + ATP = UDP-N-acetyl-alpha-D-muramoyl-L-alanyl-gamma-D-glutamyl-meso-2,6-diaminopimelate + ADP + phosphate + H(+). Its pathway is cell wall biogenesis; peptidoglycan biosynthesis. Its function is as follows. Catalyzes the addition of meso-diaminopimelic acid to the nucleotide precursor UDP-N-acetylmuramoyl-L-alanyl-D-glutamate (UMAG) in the biosynthesis of bacterial cell-wall peptidoglycan. The chain is UDP-N-acetylmuramoyl-L-alanyl-D-glutamate--2,6-diaminopimelate ligase from Prochlorococcus marinus subsp. pastoris (strain CCMP1986 / NIES-2087 / MED4).